Consider the following 84-residue polypeptide: Small ribosomal subunit protein uS17 (84 aa).

Belongs to the universal ribosomal protein uS17 family. Part of the 30S ribosomal subunit.

One of the primary rRNA binding proteins, it binds specifically to the 5'-end of 16S ribosomal RNA. The sequence is that of Small ribosomal subunit protein uS17 from Clostridium perfringens (strain ATCC 13124 / DSM 756 / JCM 1290 / NCIMB 6125 / NCTC 8237 / Type A).